Here is a 328-residue protein sequence, read N- to C-terminus: Spermatogenesis- and oogenesis-specific basic helix-loop-helix-containing protein 1 (328 aa).

The 52-residue stretch at 53–104 (SCLRRNVISERERRKRMSLSCERLRALLPQFDGRREDMASVLEMSVQFLRLA) folds into the bHLH domain. The segment at 290 to 328 (EAGSALGSDVDDGTSFLLTAGPSSWPGEWGPGFRAGPPA) is disordered. Residues 310–321 (GPSSWPGEWGPG) are compositionally biased toward low complexity.

Forms both hetero- and homodimers with SOHLH2.

The protein resides in the cytoplasm. It localises to the nucleus. In terms of biological role, transcription regulator of both male and female germline differentiation. Suppresses genes involved in spermatogonial stem cells maintenance, and induces genes important for spermatogonial differentiation. Coordinates oocyte differentiation without affecting meiosis I. This is Spermatogenesis- and oogenesis-specific basic helix-loop-helix-containing protein 1 (SOHLH1) from Homo sapiens (Human).